A 237-amino-acid chain; its full sequence is Segregation and condensation protein A (237 aa).

It belongs to the ScpA family. In terms of assembly, component of a cohesin-like complex composed of ScpA, ScpB and the Smc homodimer, in which ScpA and ScpB bind to the head domain of Smc. The presence of the three proteins is required for the association of the complex with DNA.

The protein localises to the cytoplasm. In terms of biological role, participates in chromosomal partition during cell division. May act via the formation of a condensin-like complex containing Smc and ScpB that pull DNA away from mid-cell into both cell halves. This chain is Segregation and condensation protein A, found in Streptococcus thermophilus (strain CNRZ 1066).